We begin with the raw amino-acid sequence, 215 residues long: Cytochrome b6 (215 aa).

A helical membrane pass occupies residues I32–F52. C35 provides a ligand contact to heme c. H86 and H100 together coordinate heme b. 3 consecutive transmembrane segments (helical) span residues A90–F110, L116–Y136, and L186–I206. 2 residues coordinate heme b: H187 and H202.

This sequence belongs to the cytochrome b family. PetB subfamily. In terms of assembly, the 4 large subunits of the cytochrome b6-f complex are cytochrome b6, subunit IV (17 kDa polypeptide, PetD), cytochrome f and the Rieske protein, while the 4 small subunits are PetG, PetL, PetM and PetN. The complex functions as a dimer. Requires heme b as cofactor. Heme c serves as cofactor.

Its subcellular location is the cellular thylakoid membrane. Functionally, component of the cytochrome b6-f complex, which mediates electron transfer between photosystem II (PSII) and photosystem I (PSI), cyclic electron flow around PSI, and state transitions. The chain is Cytochrome b6 from Synechococcus elongatus (strain ATCC 33912 / PCC 7942 / FACHB-805) (Anacystis nidulans R2).